Consider the following 158-residue polypeptide: Ribosomal RNA large subunit methyltransferase H (158 aa).

S-adenosyl-L-methionine contacts are provided by residues Leu73, Gly107, and Phe126–Leu131.

Belongs to the RNA methyltransferase RlmH family. Homodimer.

The protein resides in the cytoplasm. It carries out the reaction pseudouridine(1915) in 23S rRNA + S-adenosyl-L-methionine = N(3)-methylpseudouridine(1915) in 23S rRNA + S-adenosyl-L-homocysteine + H(+). In terms of biological role, specifically methylates the pseudouridine at position 1915 (m3Psi1915) in 23S rRNA. The sequence is that of Ribosomal RNA large subunit methyltransferase H from Rubrobacter xylanophilus (strain DSM 9941 / JCM 11954 / NBRC 16129 / PRD-1).